A 289-amino-acid chain; its full sequence is ATP phosphoribosyltransferase (289 aa).

It belongs to the ATP phosphoribosyltransferase family. Long subfamily. Mg(2+) serves as cofactor.

It is found in the cytoplasm. The catalysed reaction is 1-(5-phospho-beta-D-ribosyl)-ATP + diphosphate = 5-phospho-alpha-D-ribose 1-diphosphate + ATP. It functions in the pathway amino-acid biosynthesis; L-histidine biosynthesis; L-histidine from 5-phospho-alpha-D-ribose 1-diphosphate: step 1/9. With respect to regulation, feedback inhibited by histidine. In terms of biological role, catalyzes the condensation of ATP and 5-phosphoribose 1-diphosphate to form N'-(5'-phosphoribosyl)-ATP (PR-ATP). Has a crucial role in the pathway because the rate of histidine biosynthesis seems to be controlled primarily by regulation of HisG enzymatic activity. In Koribacter versatilis (strain Ellin345), this protein is ATP phosphoribosyltransferase.